A 344-amino-acid polypeptide reads, in one-letter code: Dihydroorotase (344 aa).

The Zn(2+) site is built by His-13 and His-15. Residues 15–17 (HLR) and Asn-41 each bind substrate. Positions 99, 136, and 174 each coordinate Zn(2+). Position 99 is an N6-carboxylysine (Lys-99). His-136 provides a ligand contact to substrate. Leu-219 contacts substrate. Residue Asp-247 participates in Zn(2+) binding. The active site involves Asp-247. Substrate contacts are provided by His-251 and Ala-263.

The protein belongs to the metallo-dependent hydrolases superfamily. DHOase family. Class II DHOase subfamily. Homodimer. The cofactor is Zn(2+).

It catalyses the reaction (S)-dihydroorotate + H2O = N-carbamoyl-L-aspartate + H(+). Its pathway is pyrimidine metabolism; UMP biosynthesis via de novo pathway; (S)-dihydroorotate from bicarbonate: step 3/3. Its function is as follows. Catalyzes the reversible cyclization of carbamoyl aspartate to dihydroorotate. The sequence is that of Dihydroorotase from Acinetobacter baumannii (strain AB307-0294).